The chain runs to 172 residues: Adenine phosphoribosyltransferase (172 aa).

It belongs to the purine/pyrimidine phosphoribosyltransferase family. As to quaternary structure, homodimer.

The protein localises to the cytoplasm. The catalysed reaction is AMP + diphosphate = 5-phospho-alpha-D-ribose 1-diphosphate + adenine. Its pathway is purine metabolism; AMP biosynthesis via salvage pathway; AMP from adenine: step 1/1. In terms of biological role, catalyzes a salvage reaction resulting in the formation of AMP, that is energically less costly than de novo synthesis. The protein is Adenine phosphoribosyltransferase of Rippkaea orientalis (strain PCC 8801 / RF-1) (Cyanothece sp. (strain PCC 8801)).